Consider the following 172-residue polypeptide: MDRAQKEKVVEELGQIFESSGVVVVAHYAGLTVAEMQDLRARAREAGGSVRVAKNRLAKIALEGKPCASMADLLTGMTVLTYSEDPVAAAKVAEGFAKDNKKFEILGGAMGENALDRAGVEAVSKMPSREELIAQIVSCIGAPASNIAGAIGAPASNIAGILSTIIEKAEAA.

The protein belongs to the universal ribosomal protein uL10 family. Part of the ribosomal stalk of the 50S ribosomal subunit. The N-terminus interacts with L11 and the large rRNA to form the base of the stalk. The C-terminus forms an elongated spine to which L12 dimers bind in a sequential fashion forming a multimeric L10(L12)X complex.

Forms part of the ribosomal stalk, playing a central role in the interaction of the ribosome with GTP-bound translation factors. The chain is Large ribosomal subunit protein uL10 from Ruegeria pomeroyi (strain ATCC 700808 / DSM 15171 / DSS-3) (Silicibacter pomeroyi).